The chain runs to 483 residues: MSRYLARYMVSRYFSSASSRPLHVCIVGSGPAGFYTADKVLKAHEGAHVDIIDRLPTPFGLVRSGVAPDHPETKIAINQFSRVAQHERCSFIGNVKLGSDLSLSELRDLYHVVVLAYGAESDKDLGIPGESLSGIYSAREFVWWYNGHPDYSSLKPDLKTSDSAVILGQGNVALDVARILLRPTTELASTDIATHALSALKESSIRKVYLIGRRGPVQAALTAKELREVLGIKNLHIRIKQTDLSVTPADEEEMKTSRARKRIYELLSKAAAAAKTSEADPDQRELHFVFFRQPDQFLESDERKGHVSGVNLQKTILESVGTGKQIAVGTGEFEDLNCSMVLKAIGYKSVPVNGLPFDHKKGVVPNVKGRVVSHTSGDISQTEPGLYVCGWLKRGPVGIIATNLYCAEETVGSISEDIEEGVWKSSKAGSKGLMQLLEKRKVKKVEFSGWEKIDAKEKQMGIERNKPREKLVTWEDLLAAAAN.

Residues 1-14 (MSRYLARYMVSRYF) constitute a mitochondrion transit peptide. A32, D53, L61, and L97 together coordinate FAD. Residues 169 to 172 (QGNV), 213 to 214 (RR), and E225 each bind NADP(+). Residues W391 and 398–400 (GII) each bind FAD. G398 serves as a coordination point for NADP(+).

The protein belongs to the ferredoxin--NADP reductase type 1 family. It depends on FAD as a cofactor.

The protein localises to the mitochondrion. It carries out the reaction 2 reduced [adrenodoxin] + NADP(+) + H(+) = 2 oxidized [adrenodoxin] + NADPH. Associates in vitro with the adrenodoxin-like protein MFDX1 to form an efficient low potential electron transfer chain that is able to reduce cytochrome C. Functions as accessory mitochondrial protein involved with BIO2 in the plant biotin synthase reaction. The protein is NADPH:adrenodoxin oxidoreductase, mitochondrial of Arabidopsis thaliana (Mouse-ear cress).